The chain runs to 23 residues: Maculatin-1.2 (23 aa).

Ala-23 carries the alanine amide modification.

As to expression, expressed by the skin dorsal glands.

The protein resides in the secreted. Shows antibacterial activity against S.aureus and S.uberis. This Ranoidea genimaculata (Brown-spotted tree frog) protein is Maculatin-1.2.